The primary structure comprises 326 residues: Vacuolar protein sorting-associated protein 26A-A (326 aa).

The segment at 306-326 (TNFHQRFEPQEPQASAEEPEI) is disordered. Residues 315-326 (QEPQASAEEPEI) are compositionally biased toward low complexity.

Belongs to the VPS26 family. In terms of assembly, component of the heterotrimeric retromer cargo-selective complex (CSC) which is believed to associate with variable sorting nexins to form functionally distinct retromer complex variants.

It is found in the cytoplasm. The protein localises to the endosome membrane. Its subcellular location is the early endosome. In terms of biological role, acts as a component of the retromer cargo-selective complex (CSC). The CSC is believed to be the core functional component of retromer or respective retromer complex variants acting to prevent missorting of selected transmembrane cargo proteins into the lysosomal degradation pathway. Retromer mediates retrograde transport of cargo proteins from endosomes to the trans-Golgi network (TGN). The protein is Vacuolar protein sorting-associated protein 26A-A (vps26a-a) of Xenopus laevis (African clawed frog).